Consider the following 384-residue polypeptide: Protein Brevis radix-like 4 (384 aa).

Disordered regions lie at residues 1–35 (MLTC…SQLK) and 50–78 (PCTA…SDFE). One can recognise a BRX 1 domain in the interval 150–205 (KEWVAQVEPGVLITFVSLPGGGNDLKRIRFSRDMFNKLQAQRWWADNYDKVMELYN). 2 disordered regions span residues 214-270 (FPLP…DHNS) and 304-325 (SIRS…SNAS). The span at 221-235 (RSEDENAKVEYHPED) shows a compositional bias: basic and acidic residues. Positions 260-270 (YSSSDSLDHNS) are enriched in polar residues. Positions 309-318 (SSRDADRSEE) are enriched in basic and acidic residues. The 56-residue stretch at 329 to 384 (NEWVEQDEPGVYITIKVLPGGKRELRRVRFSRERFGEMHARLWWEENRARIHEQYL) folds into the BRX 2 domain.

This sequence belongs to the BRX family. Expressed in roots.

The protein resides in the nucleus. This chain is Protein Brevis radix-like 4 (BRXL4), found in Arabidopsis thaliana (Mouse-ear cress).